Here is a 350-residue protein sequence, read N- to C-terminus: Streptomycin biosynthesis operon possible regulatory protein (350 aa).

Residues 1 to 10 (MEHISGNSPE) are compositionally biased toward polar residues. 3 disordered regions span residues 1–20 (MEHI…AAVT), 168–189 (AGVP…LDPT), and 211–258 (AAQA…SRAD). Composition is skewed to basic and acidic residues over residues 177 to 189 (IGRD…LDPT) and 223 to 242 (DVRK…DRQQ).

This is Streptomycin biosynthesis operon possible regulatory protein (strR) from Streptomyces griseus.